Reading from the N-terminus, the 198-residue chain is Putative 3-methyladenine DNA glycosylase (198 aa).

Belongs to the DNA glycosylase MPG family.

This is Putative 3-methyladenine DNA glycosylase from Rhizobium johnstonii (strain DSM 114642 / LMG 32736 / 3841) (Rhizobium leguminosarum bv. viciae).